The following is a 443-amino-acid chain: MPFVPHSPEDVSVMLDAIGVNTIEDLFADIPAEMRPKSFALPKGLSEMDVCSRLEALSARNRTDVVSFLGAGFYDHHIPKAVDALSSRGEFYTAYTPYQPEAAQGTLQAIFEFQTAVCRLLDMDCANASVYDGGSALFEAMMMAVRATRRRKLVIDEALSPIYRTMLASYTSNLQLELVTVPHRDGLPDMDALKASVDDTCAAVVVQNPNFFGAITDFTDLFTHARAHKALGVISVYPVMQSVLKTPGEMGADIAVADGQSIGQPLSFGGPYLGIMTCTKPLVRQIPGRIVGRTQDVDGRTGYVLTLQAREQHIRRAKATSNICSNQALCALRSLIHLTLLGPEGLVRTAELSMERARYAAERLTALPGVELLHDAPFGNEFAVRLPVSAFEVVDRLTARGYVPGFPVGRYYPGMDNVLLVACTEKHSFEQVGILAEMLGGIL.

It belongs to the GcvP family. N-terminal subunit subfamily. The glycine cleavage system is composed of four proteins: P, T, L and H. In this organism, the P 'protein' is a heterodimer of two subunits.

The catalysed reaction is N(6)-[(R)-lipoyl]-L-lysyl-[glycine-cleavage complex H protein] + glycine + H(+) = N(6)-[(R)-S(8)-aminomethyldihydrolipoyl]-L-lysyl-[glycine-cleavage complex H protein] + CO2. Its function is as follows. The glycine cleavage system catalyzes the degradation of glycine. The P protein binds the alpha-amino group of glycine through its pyridoxal phosphate cofactor; CO(2) is released and the remaining methylamine moiety is then transferred to the lipoamide cofactor of the H protein. The chain is Probable glycine dehydrogenase (decarboxylating) subunit 1 from Nitratidesulfovibrio vulgaris (strain DP4) (Desulfovibrio vulgaris).